A 214-amino-acid chain; its full sequence is Large ribosomal subunit protein uL2my, C-terminal part (214 aa).

A mitochondrion-targeting transit peptide spans 1 to 30 (MSGLVALCRARASASSSLFNSVIRPAFRNF). Residues 157 to 214 (VAMNPCDHPHGGGEGKSKSSGSRGRTSVSPWGKPCKGGYKSASVKKKKKRLAEAAAKM) are disordered. The segment covering 163-173 (DHPHGGGEGKS) has biased composition (basic and acidic residues). Residues 174–185 (KSSGSRGRTSVS) show a composition bias toward low complexity.

The protein belongs to the universal ribosomal protein uL2 family. In terms of assembly, component of the mitochondrial ribosome large subunit.

It is found in the mitochondrion. The sequence is that of Large ribosomal subunit protein uL2my, C-terminal part from Arabidopsis thaliana (Mouse-ear cress).